A 232-amino-acid polypeptide reads, in one-letter code: Large ribosomal subunit protein uL1 (232 aa).

Belongs to the universal ribosomal protein uL1 family. In terms of assembly, part of the 50S ribosomal subunit.

Functionally, binds directly to 23S rRNA. The L1 stalk is quite mobile in the ribosome, and is involved in E site tRNA release. Protein L1 is also a translational repressor protein, it controls the translation of the L11 operon by binding to its mRNA. The sequence is that of Large ribosomal subunit protein uL1 from Xylella fastidiosa (strain 9a5c).